A 365-amino-acid chain; its full sequence is DNA replication and repair protein RecF (365 aa).

ATP is bound at residue 30 to 37 (GRNAQGKT).

It belongs to the RecF family.

Its subcellular location is the cytoplasm. Its function is as follows. The RecF protein is involved in DNA metabolism; it is required for DNA replication and normal SOS inducibility. RecF binds preferentially to single-stranded, linear DNA. It also seems to bind ATP. This is DNA replication and repair protein RecF from Streptococcus pneumoniae serotype 2 (strain D39 / NCTC 7466).